Here is a 199-residue protein sequence, read N- to C-terminus: Small ribosomal subunit protein uS4 (199 aa).

The S4 RNA-binding domain occupies 94–157; that stretch reads SRLDNLVYRA…RKLKLVQEAL (64 aa).

The protein belongs to the universal ribosomal protein uS4 family. In terms of assembly, part of the 30S ribosomal subunit. Contacts protein S5. The interaction surface between S4 and S5 is involved in control of translational fidelity.

In terms of biological role, one of the primary rRNA binding proteins, it binds directly to 16S rRNA where it nucleates assembly of the body of the 30S subunit. Functionally, with S5 and S12 plays an important role in translational accuracy. The chain is Small ribosomal subunit protein uS4 from Mycoplasmopsis synoviae (strain 53) (Mycoplasma synoviae).